The sequence spans 465 residues: Serine carboxypeptidase 24 (465 aa).

The N-terminal stretch at 1 to 24 (MARTHFIFLLLVALLSTTFPSSSS) is a signal peptide. 3 N-linked (GlcNAc...) asparagine glycosylation sites follow: Asn54, Asn105, and Asn139. 3 disulfides stabilise this stretch: Cys88/Cys349, Cys249/Cys260, and Cys285/Cys317. Residue Ser181 is part of the active site. N-linked (GlcNAc...) asparagine glycans are attached at residues Asn250, Asn293, and Asn338. The propeptide at 287–316 (AAQQKKNTTGFFVRMKNTLLRRRLVSGYDP) is linker peptide. Residues Asp386 and His438 contribute to the active site.

This sequence belongs to the peptidase S10 family. Heterodimer. In terms of processing, N-glycosylated. In terms of tissue distribution, expressed in shoots, leaves, cauline leaves, siliques and flowers. Expressed a low levels in roots and stems.

The protein localises to the secreted. It is found in the extracellular space. The enzyme catalyses Preferential release of a C-terminal arginine or lysine residue.. With respect to regulation, completely inhibited by phenylmethylsulfonyl fluoride (PMSF) and partially by leupeptin. Active serine carboxypeptidase with broad substrate preference, including basic and hydrophilic groups. Processes a protein involved in an early event in the brassinosteroid signaling pathway. The polypeptide is Serine carboxypeptidase 24 (SCPL24) (Arabidopsis thaliana (Mouse-ear cress)).